Consider the following 262-residue polypeptide: Trypsin theta (262 aa).

Residues methionine 1–glycine 19 form the signal peptide. Residues threonine 20 to arginine 34 constitute a propeptide, activation peptide. Residues isoleucine 35–glutamate 260 form the Peptidase S1 domain. Residues cysteine 61 and cysteine 77 are joined by a disulfide bond. Residues histidine 76 and aspartate 121 each act as charge relay system in the active site. Disulfide bonds link cysteine 186–cysteine 203 and cysteine 212–cysteine 236. Serine 216 serves as the catalytic Charge relay system.

This sequence belongs to the peptidase S1 family.

The protein resides in the secreted. It localises to the extracellular space. The catalysed reaction is Preferential cleavage: Arg-|-Xaa, Lys-|-Xaa.. The chain is Trypsin theta (thetaTry) from Drosophila melanogaster (Fruit fly).